The sequence spans 706 residues: DNA helicase/primase complex-associated protein (706 aa).

The disordered stretch occupies residues 203–249 (CPGGDGGEEGDGAEGGDGGVGGAGDGAGAGGGSSGKPPAGKRGRPTR). Positions 217–236 (GGDGGVGGAGDGAGAGGGSS) are enriched in gly residues.

This sequence belongs to the herpesviridae HEPA family. Associates with the primase and the helicase to form the helicase-primase complex. Interacts with the origin-binding protein. Interacts with the polymerase catalytic subunit.

It localises to the host nucleus. Functionally, component of the helicase/primase complex. Unwinds the DNA at the replication forks and generates single-stranded DNA for both leading and lagging strand synthesis. The primase synthesizes short RNA primers on the lagging strand that the polymerase presumably elongates using dNTPs. The primase-associated factor has no known catalytic activity in the complex and may serve to facilitate the formation of the replisome by directly interacting with the origin-binding protein and the polymerase. The protein is DNA helicase/primase complex-associated protein (40) of Equus caballus (Horse).